A 739-amino-acid polypeptide reads, in one-letter code: Phosphoribosylformylglycinamidine synthase subunit PurL (739 aa).

Histidine 54 is an active-site residue. Positions 57 and 96 each coordinate ATP. Position 98 (glutamate 98) interacts with Mg(2+). Residues 99–102 (SHNH) and arginine 121 contribute to the substrate site. Residue histidine 100 is the Proton acceptor of the active site. A Mg(2+)-binding site is contributed by aspartate 122. Residue glutamine 245 coordinates substrate. Mg(2+) is bound at residue aspartate 273. Residue 317–319 (ESQ) coordinates substrate. The ATP site is built by aspartate 500 and glycine 537. Mg(2+) is bound at residue asparagine 538. Position 540 (serine 540) interacts with substrate.

It belongs to the FGAMS family. As to quaternary structure, monomer. Part of the FGAM synthase complex composed of 1 PurL, 1 PurQ and 2 PurS subunits.

The protein resides in the cytoplasm. The enzyme catalyses N(2)-formyl-N(1)-(5-phospho-beta-D-ribosyl)glycinamide + L-glutamine + ATP + H2O = 2-formamido-N(1)-(5-O-phospho-beta-D-ribosyl)acetamidine + L-glutamate + ADP + phosphate + H(+). It participates in purine metabolism; IMP biosynthesis via de novo pathway; 5-amino-1-(5-phospho-D-ribosyl)imidazole from N(2)-formyl-N(1)-(5-phospho-D-ribosyl)glycinamide: step 1/2. Its function is as follows. Part of the phosphoribosylformylglycinamidine synthase complex involved in the purines biosynthetic pathway. Catalyzes the ATP-dependent conversion of formylglycinamide ribonucleotide (FGAR) and glutamine to yield formylglycinamidine ribonucleotide (FGAM) and glutamate. The FGAM synthase complex is composed of three subunits. PurQ produces an ammonia molecule by converting glutamine to glutamate. PurL transfers the ammonia molecule to FGAR to form FGAM in an ATP-dependent manner. PurS interacts with PurQ and PurL and is thought to assist in the transfer of the ammonia molecule from PurQ to PurL. This chain is Phosphoribosylformylglycinamidine synthase subunit PurL, found in Bacillus cereus (strain G9842).